A 318-amino-acid chain; its full sequence is L-lactate dehydrogenase (318 aa).

NAD(+)-binding residues include valine 16, aspartate 37, and tyrosine 69. Substrate is bound by residues glutamine 86, arginine 92, and 124-127 (NPVD). Residues 122–124 (ASN) and serine 147 each bind NAD(+). A substrate-binding site is contributed by 152-155 (DSAR). Histidine 179 serves as the catalytic Proton acceptor. Tyrosine 223 bears the Phosphotyrosine mark. A substrate-binding site is contributed by threonine 232.

Belongs to the LDH/MDH superfamily. LDH family. Homotetramer.

The protein resides in the cytoplasm. It carries out the reaction (S)-lactate + NAD(+) = pyruvate + NADH + H(+). The protein operates within fermentation; pyruvate fermentation to lactate; (S)-lactate from pyruvate: step 1/1. Its function is as follows. Catalyzes the conversion of lactate to pyruvate. The polypeptide is L-lactate dehydrogenase (Mycoplasma mycoides subsp. mycoides SC (strain CCUG 32753 / NCTC 10114 / PG1)).